A 319-amino-acid chain; its full sequence is MVVVVDTVSATPIRPRHPEKAARPDSLSPKKPEWIRVRAPTSRGYADTRAIVKENGLVTVCEEAGCPNIGECWDKKHATFMIMGDTCTRACAFCNVKTGMPEALDQAEPEHVAEATFKLGLKHIVITSVDRDDLADGGAAHIAATIRAVRARCPSTTIEILTPDFLRKDGALETVVAAKPDVFNHNLETVPSRYLTVRPGARYFHSIRLLQRVKEIDPTMFTKSGIMVGLGEERHEVLQVMDDLRSADVDFLTIGQYLQPSLKHHAVMRFVTPEEFAGYESVAYSKGFLMVSSSPMTRSSHHAGDNFTKLQAARAALSR.

Positions 61, 66, 72, 87, 91, 94, and 300 each coordinate [4Fe-4S] cluster. Positions 73-289 constitute a Radical SAM core domain; the sequence is WDKKHATFMI…ESVAYSKGFL (217 aa).

This sequence belongs to the radical SAM superfamily. Lipoyl synthase family. Requires [4Fe-4S] cluster as cofactor.

The protein localises to the cytoplasm. It catalyses the reaction [[Fe-S] cluster scaffold protein carrying a second [4Fe-4S](2+) cluster] + N(6)-octanoyl-L-lysyl-[protein] + 2 oxidized [2Fe-2S]-[ferredoxin] + 2 S-adenosyl-L-methionine + 4 H(+) = [[Fe-S] cluster scaffold protein] + N(6)-[(R)-dihydrolipoyl]-L-lysyl-[protein] + 4 Fe(3+) + 2 hydrogen sulfide + 2 5'-deoxyadenosine + 2 L-methionine + 2 reduced [2Fe-2S]-[ferredoxin]. It participates in protein modification; protein lipoylation via endogenous pathway; protein N(6)-(lipoyl)lysine from octanoyl-[acyl-carrier-protein]: step 2/2. In terms of biological role, catalyzes the radical-mediated insertion of two sulfur atoms into the C-6 and C-8 positions of the octanoyl moiety bound to the lipoyl domains of lipoate-dependent enzymes, thereby converting the octanoylated domains into lipoylated derivatives. This chain is Lipoyl synthase, found in Rhodopseudomonas palustris (strain BisB18).